The primary structure comprises 372 residues: L-lysine 4-hydroxylase (372 aa).

Histidine 176, glutamate 178, and histidine 312 together coordinate Fe cation.

Belongs to the clavaminate synthase family. The cofactor is Fe(2+).

It catalyses the reaction L-lysine + 2-oxoglutarate + O2 = (4R)-4-hydroxy-L-lysine + succinate + CO2. In terms of biological role, alpha-ketoglutarate-dependent dioxygenase that in vitro catalyzes the regio- and stereoselective hydroxylation of L-lysine, leading to (4R)-4-hydroxy-L-lysine. This is L-lysine 4-hydroxylase from Flavobacterium sp. (strain CF136).